Here is a 141-residue protein sequence, read N- to C-terminus: Putative pre-16S rRNA nuclease (141 aa).

The protein belongs to the YqgF nuclease family.

The protein resides in the cytoplasm. Functionally, could be a nuclease involved in processing of the 5'-end of pre-16S rRNA. The polypeptide is Putative pre-16S rRNA nuclease (Syntrophomonas wolfei subsp. wolfei (strain DSM 2245B / Goettingen)).